We begin with the raw amino-acid sequence, 460 residues long: ATP synthase subunit beta (460 aa).

Residue 148–155 (GGAGVGKT) participates in ATP binding.

It belongs to the ATPase alpha/beta chains family. F-type ATPases have 2 components, CF(1) - the catalytic core - and CF(0) - the membrane proton channel. CF(1) has five subunits: alpha(3), beta(3), gamma(1), delta(1), epsilon(1). CF(0) has three main subunits: a(1), b(2) and c(9-12). The alpha and beta chains form an alternating ring which encloses part of the gamma chain. CF(1) is attached to CF(0) by a central stalk formed by the gamma and epsilon chains, while a peripheral stalk is formed by the delta and b chains.

It is found in the cell inner membrane. The catalysed reaction is ATP + H2O + 4 H(+)(in) = ADP + phosphate + 5 H(+)(out). Produces ATP from ADP in the presence of a proton gradient across the membrane. The catalytic sites are hosted primarily by the beta subunits. The polypeptide is ATP synthase subunit beta (Alcanivorax borkumensis (strain ATCC 700651 / DSM 11573 / NCIMB 13689 / SK2)).